Consider the following 258-residue polypeptide: UBX domain-containing protein 2A (258 aa).

The interval 1–152 is required for interaction with CHRNA3; it reads MKEVDNLDSI…SATPRIVSKA (152 aa). Residues 1–165 are required for inhibition of CHRNA3 ubiquitination and translocation of CHRNA3 to the plasma membrane resulting in an increase in acetylcholine-gated nicotinic acetylcholine receptor currents; that stretch reads MKEVDNLDSI…EVDNKSTLSA (165 aa). Residues 61 to 125 form the SEP domain; that stretch reads QVDVNIKLWK…VEDKKNEVCM (65 aa). A required for interaction with VCP region spans residues 168–258; the sequence is LNNLEPITRI…QKTAEPFRKL (91 aa). Positions 170 to 247 constitute a UBX domain; sequence NLEPITRIQI…DLQNAVIIQR (78 aa).

In terms of assembly, part of a complex composed of STUB1/CHIP, VCP/p97, CHRNA3, and UBXN2A that modulates the ubiquitination and endoplasmic reticulum-associated degradation (ERAD) of CHRNA3. Within the complex UBXN2A acts as a scaffold protein required for the interaction of CHRNA3 with VCP/p97, this interaction also inhibits CHRNA3 ubiquitination by STUB1/CHIP and subsequently ERAD. Interacts (via SEP domain) with CHRNA3 and interacts (via UBX domain) with VCP/P97; these interactions are required for the interaction of CHRNA3 with the STUB1-VCP-UBXN2A complex. Interacts with HSPA9/MOT-2 (via SBD domain); the interaction inhibits HSPA9/MOT-2 interaction with and degradation of p53, thereby promotes p53 translocation to the nucleus. Interacts with RICTOR. Ubiquitinated.

It is found in the golgi apparatus. Its subcellular location is the endoplasmic reticulum. The protein resides in the perikaryon. The protein localises to the cell projection. It localises to the dendrite. It is found in the nucleus. Its subcellular location is the cytoplasm. In terms of biological role, acts to repress the ubiquitination and subsequent endoplasmic reticulum-associated degradation of CHRNA3 by the STUB1-VCP-UBXN2A complex in cortical neurons. Also acts to promote the translocation of CHRNA3 to the plasma membrane and subsequently increases plasma membrane acetylcholine-gated ion-channel activation. Plays a role in the inhibition of STUB1-mediated TP53 degradation, via its interaction with HSPA9 which acts to inhibit TP53 binding to HSPA9. Positively mediates the ubiquitination and proteosomal degradation of RICTOR, may thereby act as a negative regulator of the mTORC2 pathway. This Rattus norvegicus (Rat) protein is UBX domain-containing protein 2A.